The primary structure comprises 318 residues: uncharacterized protein (318 aa).

A run of 4 helical transmembrane segments spans residues 112-132 (VIGV…PVFL), 147-167 (IAIE…FLSM), 209-229 (CGSS…LLVP), and 237-257 (VIDR…VLQL).

The protein localises to the cell membrane. This is an uncharacterized protein from Bacillus subtilis (strain 168).